The chain runs to 298 residues: TLR adapter interacting with SLC15A4 on the lysosome (298 aa).

The pLxIS motif motif lies at 287 to 291 (SLHIS). The residue at position 291 (Ser-291) is a Phosphoserine.

In terms of assembly, interacts (via pLxIS motif) with IRF5; leading to IRF5 activation. Interacts with SLC15A4; leading to its recruitment to endolysosome. In terms of processing, the phosphorylated pLxIS motif constitutes an IRF5-binding motif, leading to recruitment of the transcription factor IRF5 to induce type-I interferons and other cytokines.

It is found in the lysosome membrane. The protein resides in the endosome membrane. It localises to the nucleus. The protein localises to the cytoplasm. In terms of biological role, innate immune adapter that mediates the recruitment and activation of IRF5 downstream of endolysosomal toll-like receptors TLR7, TLR8 and TLR9. Following recruitment to endolysosome by SLC15A4 downstream of TLR7, TLR8 and TLR9, specifically recruits IRF5 transcription factor via its pLxIS motif, leading to IRF5 activation and subsequent expression of type I interferons. Plays a role in the regulation of endolysosomal pH in immune cells such as B-cells, dendritic cells and monocytes. The protein is TLR adapter interacting with SLC15A4 on the lysosome of Mus musculus (Mouse).